An 82-amino-acid chain; its full sequence is uncharacterized protein (82 aa).

This is an uncharacterized protein from Autographa californica nuclear polyhedrosis virus (AcMNPV).